Here is a 151-residue protein sequence, read N- to C-terminus: Viral interleukin-17 (151 aa).

An N-terminal signal peptide occupies residues 1–22 (MTFRKTSLVLLLLLSIDCIVKS). Asparagine 36, asparagine 53, and asparagine 64 each carry an N-linked (GlcNAc...) asparagine; by host glycan. 2 cysteine pairs are disulfide-bonded: cysteine 90–cysteine 140 and cysteine 95–cysteine 142.

Belongs to the IL-17 family.

It is found in the secreted. In Saimiri sciureus (Common squirrel monkey), this protein is Viral interleukin-17 (13).